A 207-amino-acid polypeptide reads, in one-letter code: Small ribosomal subunit protein uS2 (207 aa).

The protein belongs to the universal ribosomal protein uS2 family.

This Methanocella arvoryzae (strain DSM 22066 / NBRC 105507 / MRE50) protein is Small ribosomal subunit protein uS2.